The sequence spans 565 residues: Formate--tetrahydrofolate ligase (565 aa).

Position 67–74 (67–74 (TPLGEGKT)) interacts with ATP.

This sequence belongs to the formate--tetrahydrofolate ligase family.

It catalyses the reaction (6S)-5,6,7,8-tetrahydrofolate + formate + ATP = (6R)-10-formyltetrahydrofolate + ADP + phosphate. It functions in the pathway one-carbon metabolism; tetrahydrofolate interconversion. This chain is Formate--tetrahydrofolate ligase, found in Saccharopolyspora erythraea (strain ATCC 11635 / DSM 40517 / JCM 4748 / NBRC 13426 / NCIMB 8594 / NRRL 2338).